A 359-amino-acid chain; its full sequence is DNA polymerase IV (359 aa).

The region spanning 4 to 184 (IVHVDMDAFY…LKVNRIPGVG (181 aa)) is the UmuC domain. The Mg(2+) site is built by aspartate 8 and aspartate 102. Glutamate 103 is a catalytic residue.

This sequence belongs to the DNA polymerase type-Y family. Monomer. The cofactor is Mg(2+).

The protein localises to the cytoplasm. The catalysed reaction is DNA(n) + a 2'-deoxyribonucleoside 5'-triphosphate = DNA(n+1) + diphosphate. In terms of biological role, poorly processive, error-prone DNA polymerase involved in untargeted mutagenesis. Copies undamaged DNA at stalled replication forks, which arise in vivo from mismatched or misaligned primer ends. These misaligned primers can be extended by PolIV. Exhibits no 3'-5' exonuclease (proofreading) activity. May be involved in translesional synthesis, in conjunction with the beta clamp from PolIII. This chain is DNA polymerase IV, found in Xanthomonas euvesicatoria pv. vesicatoria (strain 85-10) (Xanthomonas campestris pv. vesicatoria).